The primary structure comprises 185 residues: Elongation factor P (185 aa).

The protein belongs to the elongation factor P family.

Its subcellular location is the cytoplasm. It participates in protein biosynthesis; polypeptide chain elongation. Its function is as follows. Involved in peptide bond synthesis. Stimulates efficient translation and peptide-bond synthesis on native or reconstituted 70S ribosomes in vitro. Probably functions indirectly by altering the affinity of the ribosome for aminoacyl-tRNA, thus increasing their reactivity as acceptors for peptidyl transferase. This chain is Elongation factor P, found in Streptococcus pyogenes serotype M5 (strain Manfredo).